We begin with the raw amino-acid sequence, 326 residues long: Ribose-phosphate pyrophosphokinase 4 (326 aa).

Residues Asp-140, His-142, His-151, and Asp-155 each contribute to the Mg(2+) site.

It belongs to the ribose-phosphate pyrophosphokinase family.

The protein localises to the cytoplasm. It catalyses the reaction D-ribose 5-phosphate + ATP = 5-phospho-alpha-D-ribose 1-diphosphate + AMP + H(+). It participates in metabolic intermediate biosynthesis; 5-phospho-alpha-D-ribose 1-diphosphate biosynthesis; 5-phospho-alpha-D-ribose 1-diphosphate from D-ribose 5-phosphate (route I): step 1/1. In terms of biological role, 5-phosphoribose 1-diphosphate synthase involved in nucleotide, histidine, and tryptophan biosynthesis. Active in heteromultimeric complexes with other 5-phosphoribose 1-diphosphate synthases (PRS2, PRS3, PRS4 and PRS5). In Saccharomyces cerevisiae (strain ATCC 204508 / S288c) (Baker's yeast), this protein is Ribose-phosphate pyrophosphokinase 4 (PRS4).